The chain runs to 273 residues: 3-methyl-2-oxobutanoate hydroxymethyltransferase (273 aa).

Mg(2+) is bound by residues Asp53 and Asp92. 3-methyl-2-oxobutanoate is bound by residues 53–54 (DS), Asp92, and Lys120. Mg(2+) is bound at residue Glu122. Glu189 acts as the Proton acceptor in catalysis.

It belongs to the PanB family. Homodecamer; pentamer of dimers. It depends on Mg(2+) as a cofactor.

It localises to the cytoplasm. The enzyme catalyses 3-methyl-2-oxobutanoate + (6R)-5,10-methylene-5,6,7,8-tetrahydrofolate + H2O = 2-dehydropantoate + (6S)-5,6,7,8-tetrahydrofolate. It participates in cofactor biosynthesis; (R)-pantothenate biosynthesis; (R)-pantoate from 3-methyl-2-oxobutanoate: step 1/2. Catalyzes the reversible reaction in which hydroxymethyl group from 5,10-methylenetetrahydrofolate is transferred onto alpha-ketoisovalerate to form ketopantoate. The protein is 3-methyl-2-oxobutanoate hydroxymethyltransferase of Cupriavidus necator (strain ATCC 17699 / DSM 428 / KCTC 22496 / NCIMB 10442 / H16 / Stanier 337) (Ralstonia eutropha).